Consider the following 165-residue polypeptide: uncharacterized protein (165 aa).

The first 25 residues, 1–25 (MKRVLFSVIVFTAVGFTFCQSKAHA), serve as a signal peptide directing secretion.

This is an uncharacterized protein from Bacillus subtilis (strain 168).